Consider the following 99-residue polypeptide: MAAQTFALRLLLVGTLLGTLLGQGCCQHWSYGLSPGGKRELDGLSETLGNQIVGSFPHVATPCRVLGCAEESPFPKIYRMKGFLDAVTDRENGNRTYKK.

A signal peptide spans 1–26 (MAAQTFALRLLLVGTLLGTLLGQGCC). Q27 is subject to Pyrrolidone carboxylic acid. G36 carries the glycine amide modification.

Belongs to the GnRH family.

It is found in the secreted. Its function is as follows. Stimulates the secretion of gonadotropins. The polypeptide is Progonadoliberin-1 (gnrh1) (Dicentrarchus labrax (European seabass)).